The sequence spans 131 residues: Large ribosomal subunit protein bL12 (131 aa).

Belongs to the bacterial ribosomal protein bL12 family. In terms of assembly, homodimer. Part of the ribosomal stalk of the 50S ribosomal subunit. Forms a multimeric L10(L12)X complex, where L10 forms an elongated spine to which 2 to 4 L12 dimers bind in a sequential fashion. Binds GTP-bound translation factors.

Its function is as follows. Forms part of the ribosomal stalk which helps the ribosome interact with GTP-bound translation factors. Is thus essential for accurate translation. The protein is Large ribosomal subunit protein bL12 of Prochlorococcus marinus (strain NATL2A).